A 675-amino-acid polypeptide reads, in one-letter code: Potassium-transporting ATPase ATP-binding subunit (675 aa).

A run of 4 helical transmembrane segments spans residues 34 to 54, 65 to 85, 216 to 236, and 245 to 265; these read IMFV…FPDI, LITI…SEAF, IALF…IVTL, and LILP…TTIG. The active-site 4-aspartylphosphate intermediate is Asp-304. Residues Asp-341, Glu-345, 372–379, and Lys-390 each bind ATP; that span reads FTAETRMS. Mg(2+) is bound by residues Asp-513 and Asp-517. 3 helical membrane passes run 569 to 591, 611 to 631, and 644 to 664; these read ALTT…ALMM, AIIS…PIAM, and IFIN…FLGI.

The protein belongs to the cation transport ATPase (P-type) (TC 3.A.3) family. Type IA subfamily. The system is composed of three essential subunits: KdpA, KdpB and KdpC.

The protein resides in the cell membrane. It catalyses the reaction K(+)(out) + ATP + H2O = K(+)(in) + ADP + phosphate + H(+). Part of the high-affinity ATP-driven potassium transport (or Kdp) system, which catalyzes the hydrolysis of ATP coupled with the electrogenic transport of potassium into the cytoplasm. This subunit is responsible for energy coupling to the transport system and for the release of the potassium ions to the cytoplasm. The sequence is that of Potassium-transporting ATPase ATP-binding subunit from Staphylococcus aureus (strain Newman).